Reading from the N-terminus, the 497-residue chain is COP9 signalosome complex subunit 3 (497 aa).

The 176-residue stretch at 233–408 (QAFDAFERCV…DGSPAYLTFL (176 aa)) folds into the PCI domain.

This sequence belongs to the CSN3 family. As to quaternary structure, component of the COP9 signalosome (CSN) complex.

It is found in the cytoplasm. Its subcellular location is the nucleus. In terms of biological role, component of the COP9 signalosome (CSN) complex that acts as an regulator of the ubiquitin (Ubl) conjugation pathway by mediating the deneddylation of the cullin subunit of SCF-type E3 ubiquitin-protein ligase complexes. The CSN complex is involved in the regulation of the circadian clock through its control of the stability of the SCF(FWD1) complex. This Neurospora crassa (strain ATCC 24698 / 74-OR23-1A / CBS 708.71 / DSM 1257 / FGSC 987) protein is COP9 signalosome complex subunit 3 (csn-3).